The primary structure comprises 498 residues: Acetyl-coenzyme A carboxylase carboxyl transferase subunit beta, chloroplastic (498 aa).

A CoA carboxyltransferase N-terminal domain is found at 228 to 498 (LWVQCEICYG…LNHNLSRTLT (271 aa)). The Zn(2+) site is built by Cys-232, Cys-235, Cys-251, and Cys-254. The C4-type zinc-finger motif lies at 232-254 (CEICYGLNYKKFFKSKMNICEQC).

This sequence belongs to the AccD/PCCB family. Acetyl-CoA carboxylase is a heterohexamer composed of biotin carboxyl carrier protein, biotin carboxylase and 2 subunits each of ACCase subunit alpha and ACCase plastid-coded subunit beta (accD). The cofactor is Zn(2+).

The protein localises to the plastid. It is found in the chloroplast stroma. The catalysed reaction is N(6)-carboxybiotinyl-L-lysyl-[protein] + acetyl-CoA = N(6)-biotinyl-L-lysyl-[protein] + malonyl-CoA. It participates in lipid metabolism; malonyl-CoA biosynthesis; malonyl-CoA from acetyl-CoA: step 1/1. In terms of biological role, component of the acetyl coenzyme A carboxylase (ACC) complex. Biotin carboxylase (BC) catalyzes the carboxylation of biotin on its carrier protein (BCCP) and then the CO(2) group is transferred by the transcarboxylase to acetyl-CoA to form malonyl-CoA. The sequence is that of Acetyl-coenzyme A carboxylase carboxyl transferase subunit beta, chloroplastic from Populus alba (White poplar).